We begin with the raw amino-acid sequence, 237 residues long: BTB/POZ domain-containing protein KCTD6 (237 aa).

Residues 1–104 form an interaction with ANK1 isoform Mu7 region; the sequence is MDNGDWGYMM…FYQIEPLIQC (104 aa). An interaction with CUL3 region spans residues 10–110; the sequence is MSDPVTLNVG…LIQCLNDPRP (101 aa). The region spanning 12 to 81 is the BTB domain; it reads DPVTLNVGGH…LRTSELTLPL (70 aa). The interval 113 to 187 is interaction with USP21; it reads PMDTFEEVVE…TFGPCDYHQE (75 aa).

As to quaternary structure, homopentamer. Interacts with KCTD11; KCTD6 and KCTD11 may associate in heteropentameric assemblies. Interacts (via BTB domain) with CUL3; initially a 4:4 stoichiometry has been reported, however, electron microscopy revealed pentameric states with a five-pointed pinwheel shape. The interaction with CUL3 is indicative for a participation in a BCR (BTB-CUL3-RBX1) E3 ubiquitin-protein ligase complex. Interacts with HDAC1; probably indirect as the interaction requires the presence of KCTD11. Interacts with USP21 (preferentially catalytic inactive form). Interacts with ANK1 isoform Mu7; detected in striated muscle. Interacts with USP11. Highly expressed in cerebellum and brain.

The protein resides in the cytoplasm. It localises to the myofibril. The protein localises to the sarcomere. It is found in the m line. Its pathway is protein modification; protein ubiquitination. Its function is as follows. Probable substrate-specific adapter of a BCR (BTB-CUL3-RBX1) E3 ubiquitin-protein ligase complex mediating the ubiquitination and subsequent proteasomal degradation of target proteins. Promotes the ubiquitination of HDAC1; the function seems to depend on KCTD11:KCTD6 oligomerization. Can function as antagonist of the Hedgehog pathway by affecting the nuclear transfer of transcription factor GLI1; the function probably occurs via HDAC1 down-regulation, keeping GLI1 acetylated and inactive. Inhibits cell growth and tumorigenicity of medulloblastoma (MDB). Involved in regulating protein levels of ANK1 isoform Mu7 probably implicating CUL3-dependent proteasomal degradation. The polypeptide is BTB/POZ domain-containing protein KCTD6 (Kctd6) (Mus musculus (Mouse)).